We begin with the raw amino-acid sequence, 241 residues long: Large ribosomal subunit protein uL3 (241 aa).

Disordered regions lie at residues 139-164 (VSHR…KMPG) and 215-241 (DAPK…QEGV). Residue Gln-151 is modified to N5-methylglutamine. Low complexity predominate over residues 225 to 241 (ANGGEEAAAPAAEQEGV).

It belongs to the universal ribosomal protein uL3 family. In terms of assembly, part of the 50S ribosomal subunit. Forms a cluster with proteins L14 and L19. Post-translationally, methylated by PrmB.

In terms of biological role, one of the primary rRNA binding proteins, it binds directly near the 3'-end of the 23S rRNA, where it nucleates assembly of the 50S subunit. The sequence is that of Large ribosomal subunit protein uL3 from Rhodopseudomonas palustris (strain HaA2).